A 623-amino-acid polypeptide reads, in one-letter code: UvrABC system protein C (623 aa).

The region spanning 12–91 (PSPGVYLMKS…IKQHRPKYNI (80 aa)) is the GIY-YIG domain. The 36-residue stretch at 201 to 236 (TEVARLYRSKMNLAAEQMRYEDAARYRDLLRAIEVT) folds into the UVR domain. Residues 603-623 (RLHGSPLPNPPPPGEGAMDRK) form a disordered region.

The protein belongs to the UvrC family. Interacts with UvrB in an incision complex.

The protein resides in the cytoplasm. The UvrABC repair system catalyzes the recognition and processing of DNA lesions. UvrC both incises the 5' and 3' sides of the lesion. The N-terminal half is responsible for the 3' incision and the C-terminal half is responsible for the 5' incision. In Citrifermentans bemidjiense (strain ATCC BAA-1014 / DSM 16622 / JCM 12645 / Bem) (Geobacter bemidjiensis), this protein is UvrABC system protein C.